The following is a 555-amino-acid chain: Wee1-like protein kinase 2 (555 aa).

A disordered region spans residues 1–112; that stretch reads MADTETDQGL…NFSTPKNSLG (112 aa). Ser-15 carries the phosphoserine; by CaMK2 and PKA modification. Residues 26–41 are compositionally biased toward polar residues; sequence EGQMTAQDIGGAQSQK. Over residues 57–72 the composition is skewed to basic and acidic residues; that stretch reads TRDELHTSLSRDKESP. Residue Ser-71 is modified to Phosphoserine. A compositionally biased stretch (polar residues) spans 102–112; it reads TNFSTPKNSLG. Positions 167 to 169 match the Nuclear localization signal motif; it reads KRK. Residues 208 to 485 form the Protein kinase domain; it reads FFEIEKIGVG…ARSRILWPFL (278 aa). Residues 214–222 and Lys-237 contribute to the ATP site; that span reads IGVGEFGTV. The Nuclear export signal signature appears at 310-324; that stretch reads KLKDILLQISLGLKY. Asp-334 serves as the catalytic Proton acceptor. Mg(2+) contacts are provided by Asn-339 and Asp-375. The stretch at 488 to 514 forms a coiled coil; sequence TDELQKQLNLEKSKTATLKRELKKARH.

The protein belongs to the protein kinase superfamily. Ser/Thr protein kinase family. WEE1 subfamily. Phosphorylated by PKA at Ser-15 in vitro, leading to activate kinase activity. Phosphorylation at Ser-15 by CaMK2, leading to increase its activity and promote metaphase II exit during egg activation. In terms of tissue distribution, ovary-specific.

The protein localises to the cytoplasm. It localises to the nucleus. The enzyme catalyses L-tyrosyl-[protein] + ATP = O-phospho-L-tyrosyl-[protein] + ADP + H(+). Its function is as follows. Oocyte-specific protein tyrosine kinase that phosphorylates and inhibits CDK1 and acts as a key regulator of meiosis during both prophase I and metaphase II. Required to maintain meiotic arrest in oocytes during the germinal vesicle (GV) stage, a long period of quiescence at dictyate prophase I, by phosphorylating CDK1 at 'Tyr-15', leading to inhibit CDK1 activity and prevent meiotic reentry. Also required for metaphase II exit during egg activation by phosphorylating CDK1 at 'Tyr-15', to ensure exit from meiosis in oocytes and promote pronuclear formation. The protein is Wee1-like protein kinase 2 (Wee2) of Mus musculus (Mouse).